We begin with the raw amino-acid sequence, 249 residues long: Photosystem I-associated linker protein CpcL (249 aa).

Positions 11 to 189 (VSQNQRVTNY…PRYGADHREK (179 aa)) constitute a PBS-linker domain. The helical transmembrane segment at 223–247 (VVLYVGGALVSLGIIAVALSAWGII) threads the bilayer.

It belongs to the phycobilisome linker protein family. As to quaternary structure, part of a specialized phycobilisome (PBS), a structure that is usually composed of two distinct substructures: a core complex and a number of rods radiating from the core. This protein is part of a core-less PBS rod (called CpcL-PBS) with on average 5 stacked phycocyanin hexamers (PC, CpcA and CpcB). Linker CpcL connects the PC stack to the thylakoid, the hexamers are linked by 1 copy of CpcC1, 3 copies of CpcC2 and the stack is terminated by a single copy of CpcD. Ferredoxin--NADP reductase (petH) is also part of the complex. CpcL-PBS has no central core proteins (allophycocyanin ApcA, ApcB) nor phycobiliprotein ApcE.

Its subcellular location is the cellular thylakoid membrane. Functionally, rod linker protein, associated with phycocyanin. Linker polypeptides determine the state of aggregation and the location of the disk-shaped phycobiliprotein units within the phycobilisome and modulate their spectroscopic properties in order to mediate a directed and optimal energy transfer. Plays a role in energy transfer from the phycobilisome to photosystem I (PSI). Although able to transfer energy to both photosystems, this is predominantly a PSI antenna. This chain is Photosystem I-associated linker protein CpcL, found in Synechocystis sp. (strain ATCC 27184 / PCC 6803 / Kazusa).